The chain runs to 959 residues: Autophagy-related protein 18g (959 aa).

WD repeat units follow at residues 376-416 (AHTS…SHNA) and 438-479 (ITSA…AAFQ). Residues 802 to 832 (GSIESAESSEEGSTKQMENLHDSDHMSNSIK) are disordered.

This sequence belongs to the WD repeat PROPPIN family. In terms of assembly, component of the PI(3,5)P2 regulatory complex at least composed of ATG18, SAC/FIG4, FAB1 and VAC14. As to expression, expressed in leaves.

It localises to the preautophagosomal structure membrane. The protein localises to the vacuole membrane. In terms of biological role, the PI(3,5)P2 regulatory complex regulates both the synthesis and turnover of phosphatidylinositol 3,5-bisphosphate (PtdIns(3,5)P2). Required for autophagy. The polypeptide is Autophagy-related protein 18g (ATG18G) (Arabidopsis thaliana (Mouse-ear cress)).